The sequence spans 357 residues: DNA polymerase IV (357 aa).

One can recognise a UmuC domain in the interval 4 to 185 (IIHVDMDCYF…LSLRQIPGVG (182 aa)). Residues Asp8 and Asp103 each coordinate Mg(2+). Residue Glu104 is part of the active site.

Belongs to the DNA polymerase type-Y family. Monomer. Mg(2+) serves as cofactor.

It localises to the cytoplasm. It carries out the reaction DNA(n) + a 2'-deoxyribonucleoside 5'-triphosphate = DNA(n+1) + diphosphate. Poorly processive, error-prone DNA polymerase involved in untargeted mutagenesis. Copies undamaged DNA at stalled replication forks, which arise in vivo from mismatched or misaligned primer ends. These misaligned primers can be extended by PolIV. Exhibits no 3'-5' exonuclease (proofreading) activity. May be involved in translesional synthesis, in conjunction with the beta clamp from PolIII. The sequence is that of DNA polymerase IV from Shewanella oneidensis (strain ATCC 700550 / JCM 31522 / CIP 106686 / LMG 19005 / NCIMB 14063 / MR-1).